A 171-amino-acid polypeptide reads, in one-letter code: UPF0312 protein SAR2769 (171 aa).

Belongs to the UPF0312 family.

This is UPF0312 protein SAR2769 from Staphylococcus aureus (strain MRSA252).